We begin with the raw amino-acid sequence, 486 residues long: MGTMRSVYLIIIIILFFAFISLSFGEIYEYRGVVFYPNGSQTVDVSKLHIDYENPDAFSIYISYRNSSFYLPYSKNITLNLPPKKFNISITISASRISRDEWRVYYKIINNYPYSILFNISFPGGFNIKNASVLVPAKSYKIITLSKIQNSNILYFGDSNISFEVPAKLMIRYSLPIPFSIIKSNKILSNGSIEWTAIYIIKNDKNVSLNVNASYWAVVNNTKIDFGNYSYIIEPNENVSQSFNITSDYVPIFYLKFYAWRDVYETIKIKPAIKVDNSYIIGIGKVEGLSFNIPYYNYMEREIKKKKEEKENEESSKTINQMQRHKKEEKSQTQETKKPSKNEMNKQEKERKYPLIIEEKFKKVAAAIATVTTTSITAMLIPPIFRRRSYIVDKGIFSIKDLELLSGTVYVPEGCKLGNILPGGITIIKLTDVEKDLARDLHEIYDIPLNSAKAIILGVKYGGRVFLSDKKAYDVAVEIGLEAYLF.

An N-terminal signal peptide occupies residues 1–25 (MGTMRSVYLIIIIILFFAFISLSFG). Basic and acidic residues-rich tracts occupy residues 306–316 (KKEEKENEESS) and 326–349 (KKEE…KQEK). The segment at 306–349 (KKEEKENEESSKTINQMQRHKKEEKSQTQETKKPSKNEMNKQEK) is disordered.

This is an uncharacterized protein from Methanocaldococcus jannaschii (strain ATCC 43067 / DSM 2661 / JAL-1 / JCM 10045 / NBRC 100440) (Methanococcus jannaschii).